We begin with the raw amino-acid sequence, 266 residues long: Small ribosomal subunit protein uS2 (266 aa).

Residues 247–266 form a disordered region; that stretch reads EGENNYSNNRSWNKPERTNN. A compositionally biased stretch (polar residues) spans 249–258; it reads ENNYSNNRSW.

It belongs to the universal ribosomal protein uS2 family.

The polypeptide is Small ribosomal subunit protein uS2 (Mesoplasma florum (strain ATCC 33453 / NBRC 100688 / NCTC 11704 / L1) (Acholeplasma florum)).